Consider the following 352-residue polypeptide: Photosystem II D2 protein (352 aa).

The helical transmembrane segment at 40-60 (CAFLSIGGWLTGTTFVTSWYT) threads the bilayer. H117 contacts chlorophyll a. Residues 124-140 (GFCLRQIEIARLVGIRP) form a helical membrane-spanning segment. Pheophytin a-binding residues include Q129 and N142. A helical membrane pass occupies residues 152 to 165 (VFVSVFLMYPLGQS). H197 is a chlorophyll a binding site. Residues 207-227 (GALLCAIHGATVENTLFQDGE) form a helical membrane-spanning segment. Residues H214 and F261 each coordinate a plastoquinone. Residue H214 participates in Fe cation binding. H268 is a binding site for Fe cation. Residues 278–294 (GLWMSSIGIVGLAFNLR) form a helical membrane-spanning segment.

The protein belongs to the reaction center PufL/M/PsbA/D family. In terms of assembly, PSII is composed of 1 copy each of membrane proteins PsbA, PsbB, PsbC, PsbD, PsbE, PsbF, PsbH, PsbI, PsbJ, PsbK, PsbL, PsbM, PsbT, PsbX, PsbY, PsbZ, Psb30/Ycf12, peripheral proteins PsbO, CyanoQ (PsbQ), PsbU, PsbV and a large number of cofactors. It forms dimeric complexes. It depends on The D1/D2 heterodimer binds P680, chlorophylls that are the primary electron donor of PSII, and subsequent electron acceptors. It shares a non-heme iron and each subunit binds pheophytin, quinone, additional chlorophylls, carotenoids and lipids. There is also a Cl(-1) ion associated with D1 and D2, which is required for oxygen evolution. The PSII complex binds additional chlorophylls, carotenoids and specific lipids. as a cofactor.

Its subcellular location is the cellular thylakoid membrane. It catalyses the reaction 2 a plastoquinone + 4 hnu + 2 H2O = 2 a plastoquinol + O2. Its function is as follows. Photosystem II (PSII) is a light-driven water:plastoquinone oxidoreductase that uses light energy to abstract electrons from H(2)O, generating O(2) and a proton gradient subsequently used for ATP formation. It consists of a core antenna complex that captures photons, and an electron transfer chain that converts photonic excitation into a charge separation. The D1/D2 (PsbA/PsbD) reaction center heterodimer binds P680, the primary electron donor of PSII as well as several subsequent electron acceptors. D2 is needed for assembly of a stable PSII complex. In Trichodesmium erythraeum (strain IMS101), this protein is Photosystem II D2 protein.